Here is a 428-residue protein sequence, read N- to C-terminus: Enolase (428 aa).

Gln164 is a (2R)-2-phosphoglycerate binding site. The Proton donor role is filled by Glu206. Mg(2+) is bound by residues Asp243, Glu286, and Asp313. Positions 338, 367, 368, and 389 each coordinate (2R)-2-phosphoglycerate. Lys338 (proton acceptor) is an active-site residue.

The protein belongs to the enolase family. Requires Mg(2+) as cofactor.

It localises to the cytoplasm. Its subcellular location is the secreted. The protein localises to the cell surface. The catalysed reaction is (2R)-2-phosphoglycerate = phosphoenolpyruvate + H2O. It functions in the pathway carbohydrate degradation; glycolysis; pyruvate from D-glyceraldehyde 3-phosphate: step 4/5. Its function is as follows. Catalyzes the reversible conversion of 2-phosphoglycerate (2-PG) into phosphoenolpyruvate (PEP). It is essential for the degradation of carbohydrates via glycolysis. The chain is Enolase from Dehalococcoides mccartyi (strain ATCC BAA-2266 / KCTC 15142 / 195) (Dehalococcoides ethenogenes (strain 195)).